The primary structure comprises 74 residues: Consomatin Ma1 (74 aa).

The N-terminal stretch at 1–22 (MQTAYWVMVMMMVWITAPLSEG) is a signal peptide. Positions 23–57 (GKLNGEIRGLVSHILIPQHTLRSLTSRDRSDNGGS) are excised as a propeptide. Cysteines 63 and 68 form a disulfide. D-tryptophan is present on Trp-65. 4-hydroxyproline is present on residues Pro-69, Pro-70, and Pro-72.

The protein belongs to the conotoxin C superfamily. Consomatin family. Expressed by the venom duct.

The protein localises to the secreted. Its function is as follows. Moderately activates human somatostatin receptors (SSTR) with a preferential activation of SSTR1 and SSTR4. In vivo, does not cause behavioral changes in mice within a few minutes of intracranial injection, but causes a progressive loss of movement thereafter. Four to five hours after injection, mice recover, even with the highest dose tested. Shows antinociception and antihyperalgesia activities in two mouse models of acute pain, most probably by acting outside the central nervous system. The sequence is that of Consomatin Ma1 from Conus magus (Magical cone).